Consider the following 126-residue polypeptide: Large ribosomal subunit protein eL32 (126 aa).

This sequence belongs to the eukaryotic ribosomal protein eL32 family.

This Thermococcus onnurineus (strain NA1) protein is Large ribosomal subunit protein eL32.